Reading from the N-terminus, the 418-residue chain is Serine hydroxymethyltransferase (418 aa).

Residues L121 and 125-127 (GHL) each bind (6S)-5,6,7,8-tetrahydrofolate. The residue at position 230 (K230) is an N6-(pyridoxal phosphate)lysine. (6S)-5,6,7,8-tetrahydrofolate is bound at residue 355 to 357 (SPF).

Belongs to the SHMT family. In terms of assembly, homodimer. It depends on pyridoxal 5'-phosphate as a cofactor.

Its subcellular location is the cytoplasm. It carries out the reaction (6R)-5,10-methylene-5,6,7,8-tetrahydrofolate + glycine + H2O = (6S)-5,6,7,8-tetrahydrofolate + L-serine. It participates in one-carbon metabolism; tetrahydrofolate interconversion. Its pathway is amino-acid biosynthesis; glycine biosynthesis; glycine from L-serine: step 1/1. In terms of biological role, catalyzes the reversible interconversion of serine and glycine with tetrahydrofolate (THF) serving as the one-carbon carrier. This reaction serves as the major source of one-carbon groups required for the biosynthesis of purines, thymidylate, methionine, and other important biomolecules. Also exhibits THF-independent aldolase activity toward beta-hydroxyamino acids, producing glycine and aldehydes, via a retro-aldol mechanism. The sequence is that of Serine hydroxymethyltransferase from Streptococcus pneumoniae (strain P1031).